Consider the following 76-residue polypeptide: Protein CsbA (76 aa).

Topologically, residues 1-5 (MITKA) are extracellular. The chain crosses the membrane as a helical span at residues 6-22 (VFALFFPFMLVVLFTRV). Topologically, residues 23–27 (TFNHY) are cytoplasmic. The chain crosses the membrane as a helical span at residues 28–44 (VAIALTAALLFASYLKG). Topologically, residues 45–49 (YTETY) are extracellular. Residues 50 to 66 (FIVGLDVVSLVAGGLYM) form a helical membrane-spanning segment. Topologically, residues 67–76 (AKKAAEKKEE) are cytoplasmic.

It is found in the cell membrane. The protein is Protein CsbA (csbA) of Bacillus subtilis (strain 168).